The chain runs to 146 residues: Snaclec agkisacutacin subunit B (146 aa).

An N-terminal signal peptide occupies residues 1 to 23 (MGRFIFVSFGLLVVFLSLSGTAA). One can recognise a C-type lectin domain in the interval 24 to 146 (DCPSDWSSYE…TCSFVCKFQA (123 aa)). Disulfide bonds link Cys25–Cys36, Cys53–Cys142, and Cys119–Cys134. Positions 64 and 70 each coordinate Ca(2+).

It belongs to the snaclec family. Heterodimer of subunits A and B; disulfide-linked. Expressed by the venom gland.

It localises to the secreted. Functionally, anticoagulant protein which binds to the gamma-carboxyglutamic acid-domain regions of factor IX (F9) and factor X (F10) in the presence of calcium with a 1 to 1 stoichiometry. Also inhibits platelet aggregation by binding to platelet glycoprotein Ibalpha (GP1BA) and functioning as a blocker of von Willebrand factor (VWF). Is devoid of hemorrhagic and lethal activities. Possesses antithrombotic and thrombolytic activities. Also hydrolyzes the Aalpha-chain of fibrinogen (FGA). Does not affect the Bbeta-chain (FGB) and the gamma chain (FGG). This is Snaclec agkisacutacin subunit B from Deinagkistrodon acutus (Hundred-pace snake).